Consider the following 315-residue polypeptide: Triosephosphate isomerase, chloroplastic (315 aa).

The N-terminal 60 residues, 1-60, are a transit peptide targeting the chloroplast; that stretch reads MAATSLTAPPSFSGLRRISPKLDAAAVSSHQSFFHRVNSSTRLVSSSSSSHRSPRGVVAM. Substrate-binding residues include Asn71 and Lys73. The active-site Electrophile is His155. Residue Ser178 is modified to Phosphoserine. Glu225 functions as the Proton acceptor in the catalytic mechanism.

This sequence belongs to the triosephosphate isomerase family. As to quaternary structure, homodimer.

The protein localises to the plastid. Its subcellular location is the chloroplast. It carries out the reaction D-glyceraldehyde 3-phosphate = dihydroxyacetone phosphate. The protein operates within carbohydrate biosynthesis; Calvin cycle. This is Triosephosphate isomerase, chloroplastic (TIM) from Arabidopsis thaliana (Mouse-ear cress).